Consider the following 526-residue polypeptide: Na(+)/H(+) antiporter NhaB (526 aa).

12 consecutive transmembrane segments (helical) span residues 25 to 45 (ILLF…IAGW), 52 to 72 (IFTL…LLAI), 89 to 109 (LVAN…IYFM), 130 to 164 (LSLA…FYAI), 204 to 224 (LMMH…VGEP), 242 to 262 (IRMS…CVLV), 307 to 327 (IALW…LIGL), 350 to 370 (QEAL…AVII), 391 to 411 (LALF…VFVG), 448 to 468 (VATP…LAPL), 479 to 499 (MALP…EMLL), and 505 to 525 (WFYQ…LPVL).

Belongs to the NhaB Na(+)/H(+) (TC 2.A.34) antiporter family.

It localises to the cell inner membrane. It catalyses the reaction 2 Na(+)(in) + 3 H(+)(out) = 2 Na(+)(out) + 3 H(+)(in). Its function is as follows. Na(+)/H(+) antiporter that extrudes sodium in exchange for external protons. The chain is Na(+)/H(+) antiporter NhaB from Aeromonas hydrophila subsp. hydrophila (strain ATCC 7966 / DSM 30187 / BCRC 13018 / CCUG 14551 / JCM 1027 / KCTC 2358 / NCIMB 9240 / NCTC 8049).